The sequence spans 316 residues: Altered inheritance of mitochondria protein 18, mitochondrial (316 aa).

Residues 1 to 41 (MFGRVFNRSSPIIRLSVRTITSLNGARASVNRPLAKTLISN) constitute a mitochondrion transit peptide.

The protein belongs to the AIM18/AIM46 family.

The protein resides in the mitochondrion. In Vanderwaltozyma polyspora (strain ATCC 22028 / DSM 70294 / BCRC 21397 / CBS 2163 / NBRC 10782 / NRRL Y-8283 / UCD 57-17) (Kluyveromyces polysporus), this protein is Altered inheritance of mitochondria protein 18, mitochondrial (AIM18).